The primary structure comprises 200 residues: Holliday junction branch migration complex subunit RuvA (200 aa).

The tract at residues 1–64 (MFAYFKGSLV…EDALQLYGFF (64 aa)) is domain I. The interval 65 to 143 (KEEERQLFRL…KLPLVTPAAG (79 aa)) is domain II. The tract at residues 143–147 (GKAAM) is flexible linker. The tract at residues 148 to 200 (PSHHVKDDAVHALVTLGFSRLLAQKAVSALLEEKPEQSVEEVIKYALATIHNS) is domain III.

It belongs to the RuvA family. In terms of assembly, homotetramer. Forms an RuvA(8)-RuvB(12)-Holliday junction (HJ) complex. HJ DNA is sandwiched between 2 RuvA tetramers; dsDNA enters through RuvA and exits via RuvB. An RuvB hexamer assembles on each DNA strand where it exits the tetramer. Each RuvB hexamer is contacted by two RuvA subunits (via domain III) on 2 adjacent RuvB subunits; this complex drives branch migration. In the full resolvosome a probable DNA-RuvA(4)-RuvB(12)-RuvC(2) complex forms which resolves the HJ.

The protein resides in the cytoplasm. Functionally, the RuvA-RuvB-RuvC complex processes Holliday junction (HJ) DNA during genetic recombination and DNA repair, while the RuvA-RuvB complex plays an important role in the rescue of blocked DNA replication forks via replication fork reversal (RFR). RuvA specifically binds to HJ cruciform DNA, conferring on it an open structure. The RuvB hexamer acts as an ATP-dependent pump, pulling dsDNA into and through the RuvAB complex. HJ branch migration allows RuvC to scan DNA until it finds its consensus sequence, where it cleaves and resolves the cruciform DNA. This is Holliday junction branch migration complex subunit RuvA from Chlorobium phaeobacteroides (strain DSM 266 / SMG 266 / 2430).